We begin with the raw amino-acid sequence, 126 residues long: Large ribosomal subunit protein bL12 (126 aa).

This sequence belongs to the bacterial ribosomal protein bL12 family. In terms of assembly, homodimer. Part of the ribosomal stalk of the 50S ribosomal subunit. Forms a multimeric L10(L12)X complex, where L10 forms an elongated spine to which 2 to 4 L12 dimers bind in a sequential fashion. Binds GTP-bound translation factors.

In terms of biological role, forms part of the ribosomal stalk which helps the ribosome interact with GTP-bound translation factors. Is thus essential for accurate translation. The protein is Large ribosomal subunit protein bL12 of Coxiella burnetii (strain CbuK_Q154) (Coxiella burnetii (strain Q154)).